The chain runs to 174 residues: UPF0398 protein llmg_0513 (174 aa).

The protein belongs to the UPF0398 family.

In Lactococcus lactis subsp. cremoris (strain MG1363), this protein is UPF0398 protein llmg_0513.